The primary structure comprises 1047 residues: Ubiquitin carboxyl-terminal hydrolase 28 (1047 aa).

Disordered regions lie at residues Asp60 to Lys95 and Ser110 to Val138. The UIM domain maps to Glu94–Ala113. A compositionally biased stretch (basic and acidic residues) spans Pro111–Lys128. The USP domain maps to Val156 to Asp651. Cys165 serves as the catalytic Nucleophile. Positions Ser461–Asp486 are enriched in polar residues. Positions Ser461–Cys528 are disordered. Positions Leu489–Asp498 are enriched in basic and acidic residues. Residues Ala504–Leu516 are compositionally biased toward polar residues. Residue His601 is the Proton acceptor of the active site. A disordered region spans residues Glu694–Leu735. Residues Lys705–Ser717 are compositionally biased toward polar residues.

This sequence belongs to the peptidase C19 family. USP28 subfamily.

The protein resides in the nucleus. Its subcellular location is the nucleoplasm. The catalysed reaction is Thiol-dependent hydrolysis of ester, thioester, amide, peptide and isopeptide bonds formed by the C-terminal Gly of ubiquitin (a 76-residue protein attached to proteins as an intracellular targeting signal).. In terms of biological role, deubiquitinase involved in DNA damage response checkpoint and MYC proto-oncogene stability. Involved in DNA damage induced apoptosis by specifically deubiquitinating proteins of the DNA damage pathway such as CLSPN. Also involved in G2 DNA damage checkpoint, by deubiquitinating CLSPN, and preventing its degradation by the anaphase promoting complex/cyclosome (APC/C). Specifically deubiquitinates MYC in the nucleoplasm, leading to prevent MYC degradation by the proteasome. Deubiquitinates ZNF304, hence may prevent ZNF304 degradation by the proteasome, leading to the activated KRAS-mediated promoter hypermethylation and transcriptional silencing of tumor suppressor genes (TSGs). The sequence is that of Ubiquitin carboxyl-terminal hydrolase 28 (USP28) from Gallus gallus (Chicken).